The following is a 142-amino-acid chain: Large ribosomal subunit protein uL11 (142 aa).

Belongs to the universal ribosomal protein uL11 family. In terms of assembly, part of the ribosomal stalk of the 50S ribosomal subunit. Interacts with L10 and the large rRNA to form the base of the stalk. L10 forms an elongated spine to which L12 dimers bind in a sequential fashion forming a multimeric L10(L12)X complex. In terms of processing, one or more lysine residues are methylated.

In terms of biological role, forms part of the ribosomal stalk which helps the ribosome interact with GTP-bound translation factors. The chain is Large ribosomal subunit protein uL11 from Actinobacillus succinogenes (strain ATCC 55618 / DSM 22257 / CCUG 43843 / 130Z).